A 285-amino-acid chain; its full sequence is CCR4-NOT transcription complex subunit 7 (285 aa).

5 residues coordinate a divalent metal cation: D40, E42, D161, D230, and E278.

Belongs to the CAF1 family. As to quaternary structure, component of the CCR4-NOT complex; distinct complexes seem to exist that differ in the participation of probably mutually exclusive catalytic subunits; the complex contains two deadenylase subunits, CNOT6 or CNOT6L, and CNOT7 or CNOT8. In the complex, interacts directly with CNOT1. Interacts with AGO2. Interacts with TOB1; recruited by TOB1 to a ternary complex with CPEB3 which is required for mRNA deadenylation and decay. Interacts with BTG1. Interacts with BTG2. Interacts with NANOS2. Interacts with ZFP36, ZFP36L1 and ZFP36L2; these interactions are inhibited in response to phorbol 12-myristate 13-acetate (PMA) treatment in a p38 MAPK-dependent manner. Interacts with BTG4. Interacts with EIF4E; this interaction is increased by CNOT7 interaction with BTG4. Mn(2+) is required as a cofactor. The cofactor is Mg(2+). Requires Co(2+) as cofactor.

Its subcellular location is the nucleus. It is found in the cytoplasm. The protein resides in the P-body. It localises to the cytoplasmic ribonucleoprotein granule. The enzyme catalyses Exonucleolytic cleavage of poly(A) to 5'-AMP.. Its function is as follows. Has 3'-5' poly(A) exoribonuclease activity for synthetic poly(A) RNA substrate. Its function seems to be partially redundant with that of CNOT8. Catalytic component of the CCR4-NOT complex which is one of the major cellular mRNA deadenylases and is linked to various cellular processes including bulk mRNA degradation, miRNA-mediated repression, translational repression during translational initiation and general transcription regulation. During miRNA-mediated repression the complex also seems to act as translational repressor during translational initiation. Additional complex functions may be a consequence of its influence on mRNA expression. Required for miRNA-mediated mRNA deadenylation. Associates with members of the BTG family such as TOB1 and BTG2 and is required for their anti-proliferative activity. This is CCR4-NOT transcription complex subunit 7 (CNOT7) from Bos taurus (Bovine).